Reading from the N-terminus, the 687-residue chain is Putative ammonium transporter 3 (687 aa).

11 helical membrane passes run 39 to 59 (AVWI…FGLL), 77 to 97 (VVDV…FSYG), 134 to 154 (ASFL…SGAV), 162 to 182 (SYIL…HWVW), 196 to 216 (FAGC…ATVF), 240 to 260 (LGTF…VWGI), 272 to 292 (AVAT…ISFV), 299 to 319 (VNFL…ICAV), 323 to 343 (WHAL…LPLL), 352 to 372 (VGIV…VGIF), and 404 to 424 (CTAA…FLIS). Disordered regions lie at residues 521–544 (RTNA…FNNQ), 549–568 (AVSS…RRTE), and 592–687 (PPEE…NPPV). Residues 549–564 (AVSSTVSTARNGPSTG) show a composition bias toward polar residues. 2 stretches are compositionally biased toward low complexity: residues 614–632 (SPSS…SPSI) and 648–665 (STAS…KNST).

The protein belongs to the ammonia transporter channel (TC 1.A.11.2) family.

It is found in the membrane. In terms of biological role, involved in the uptake of ammonia. The polypeptide is Putative ammonium transporter 3 (amt-3) (Caenorhabditis elegans).